The primary structure comprises 314 residues: Probable serine/threonine-protein kinase WNK11 (314 aa).

Positions 1-22 (MMTCASSDDNESEKDKDSESFV) are disordered. The region spanning 31-289 (GRYGELLGSG…AAELLCDPFF (259 aa)) is the Protein kinase domain. ATP is bound at residue 111–114 (TEIC). D178 functions as the Proton acceptor in the catalytic mechanism. The tract at residues 295–314 (DDDEDGENNDNNGAGRIVVS) is disordered.

This sequence belongs to the protein kinase superfamily. Ser/Thr protein kinase family. WNK subfamily.

It carries out the reaction L-seryl-[protein] + ATP = O-phospho-L-seryl-[protein] + ADP + H(+). The catalysed reaction is L-threonyl-[protein] + ATP = O-phospho-L-threonyl-[protein] + ADP + H(+). Functionally, may regulate flowering time by modulating the photoperiod pathway. This Arabidopsis thaliana (Mouse-ear cress) protein is Probable serine/threonine-protein kinase WNK11 (WNK11).